A 995-amino-acid polypeptide reads, in one-letter code: Serine-aspartate repeat-containing protein C (995 aa).

An N-terminal signal peptide occupies residues 1-50; it reads MNNKKTATNRKGMIPNRLNKFSIRKYSVGTASILVGTTLIFGLSGHEAKA. The short motif at 21–32 is the YSIRK-G/S signaling motif element; the sequence is FSIRKYSVGTAS. Positions 51 to 164 are disordered; that stretch reads AEHTNGELNQ…STTPKTTTIK (114 aa). Positions 51-495 are ligand binding A region; the sequence is AEHTNGELNQ…GSSTANGDQK (445 aa). Over residues 56 to 71 the composition is skewed to polar residues; it reads GELNQSKNETTAPSEN. A compositionally biased stretch (basic and acidic residues) spans 72 to 83; sequence KTTKKVDSRQLK. The span at 84–155 shows a compositional bias: polar residues; that stretch reads DNTQTATADQ…SNLTQAKDVS (72 aa). CNA-B domains lie at 496–606 and 607–717; these read KYNL…YKTP and KYSL…EEET. Residues 678-975 are disordered; sequence TQTGTNTTED…NNSNNGTLFG (298 aa). Acidic residues-rich tracts occupy residues 685 to 695 and 712 to 934; these read TEDDKDADGGE and YYEE…DSDS. The LPXTG sorting signal signature appears at 958–962; the sequence is LPETG. Over residues 960–975 the composition is skewed to low complexity; the sequence is ETGSENNNSNNGTLFG. Thr961 carries the post-translational modification Pentaglycyl murein peptidoglycan amidated threonine. The propeptide at 962–995 is removed by sortase; that stretch reads GSENNNSNNGTLFGGLFAALGSLLLFGRRKKQNK.

The protein belongs to the serine-aspartate repeat-containing protein (SDr) family. As to quaternary structure, homodimerizes; via N2-Domain. Interacts with host NRXN1; this interaction mediates bacterial attachment to host cells.

It localises to the secreted. Its subcellular location is the cell wall. Cell surface-associated calcium-binding protein which plays an important role in adhesion and pathogenesis. Mediates interactions with components of the extracellular matrix such as host NRXN1 to promote bacterial adhesion. The polypeptide is Serine-aspartate repeat-containing protein C (sdrC) (Staphylococcus aureus (strain NCTC 8325 / PS 47)).